Reading from the N-terminus, the 117-residue chain is Large ribosomal subunit protein bL20c (117 aa).

The protein belongs to the bacterial ribosomal protein bL20 family.

The protein resides in the plastid. It is found in the chloroplast. In terms of biological role, binds directly to 23S ribosomal RNA and is necessary for the in vitro assembly process of the 50S ribosomal subunit. It is not involved in the protein synthesizing functions of that subunit. This chain is Large ribosomal subunit protein bL20c, found in Nasturtium officinale (Watercress).